A 496-amino-acid chain; its full sequence is Rhamnulokinase (496 aa).

13–17 (ASSGR) is an ATP binding site. Substrate-binding positions include Gly83 and 236 to 238 (HDT). Asp237 functions as the Proton acceptor in the catalytic mechanism. Residue Thr259 participates in ATP binding. Asn296 contacts substrate. Gln304 provides a ligand contact to ATP. Cys353 and Cys370 form a disulfide bridge. Gly402 serves as a coordination point for ATP. Cys413 and Cys417 are oxidised to a cystine.

Belongs to the rhamnulokinase family. Requires Mg(2+) as cofactor.

The catalysed reaction is L-rhamnulose + ATP = L-rhamnulose 1-phosphate + ADP + H(+). The protein operates within carbohydrate degradation; L-rhamnose degradation; glycerone phosphate from L-rhamnose: step 2/3. Involved in the catabolism of L-rhamnose (6-deoxy-L-mannose). Catalyzes the transfer of the gamma-phosphate group from ATP to the 1-hydroxyl group of L-rhamnulose to yield L-rhamnulose 1-phosphate. The sequence is that of Rhamnulokinase from Pectobacterium atrosepticum (strain SCRI 1043 / ATCC BAA-672) (Erwinia carotovora subsp. atroseptica).